The following is a 428-amino-acid chain: Aspartate--tRNA(Asp) ligase (428 aa).

Glu170 contributes to the L-aspartate binding site. Residues 192–195 (QLYK) form an aspartate region. Arg213 is a binding site for L-aspartate. ATP-binding positions include 213–215 (RAE) and Glu351. 2 residues coordinate Mg(2+): Glu351 and Ser354. L-aspartate contacts are provided by Ser354 and Arg358. Position 399 to 402 (399 to 402 (GFNR)) interacts with ATP.

The protein belongs to the class-II aminoacyl-tRNA synthetase family. Type 2 subfamily. Homodimer. It depends on Mg(2+) as a cofactor.

It localises to the cytoplasm. The catalysed reaction is tRNA(Asp) + L-aspartate + ATP = L-aspartyl-tRNA(Asp) + AMP + diphosphate. Functionally, catalyzes the attachment of L-aspartate to tRNA(Asp) in a two-step reaction: L-aspartate is first activated by ATP to form Asp-AMP and then transferred to the acceptor end of tRNA(Asp). This Pyrobaculum aerophilum (strain ATCC 51768 / DSM 7523 / JCM 9630 / CIP 104966 / NBRC 100827 / IM2) protein is Aspartate--tRNA(Asp) ligase.